Reading from the N-terminus, the 130-residue chain is Large ribosomal subunit protein bL17 (130 aa).

Belongs to the bacterial ribosomal protein bL17 family. In terms of assembly, part of the 50S ribosomal subunit. Contacts protein L32.

The sequence is that of Large ribosomal subunit protein bL17 from Buchnera aphidicola subsp. Acyrthosiphon pisum (strain 5A).